Consider the following 64-residue polypeptide: Conotoxin reg3k (64 aa).

The N-terminal stretch at 1–20 (MMFKLGVLLTICLLLFPLTA) is a signal peptide. A propeptide spanning residues 21–48 (LQLDWDQPGDHMLDISSEIDDRWFDPVR) is cleaved from the precursor. 3 disulfides stabilise this stretch: cysteine 50-cysteine 60, cysteine 51-cysteine 58, and cysteine 56-cysteine 61. Residue proline 59 is modified to 4-hydroxyproline.

Expressed by the venom duct.

It is found in the secreted. This Conus regius (Crown cone) protein is Conotoxin reg3k.